A 250-amino-acid chain; its full sequence is Pyrroloquinoline-quinone synthase (250 aa).

It belongs to the PqqC family.

The catalysed reaction is 6-(2-amino-2-carboxyethyl)-7,8-dioxo-1,2,3,4,7,8-hexahydroquinoline-2,4-dicarboxylate + 3 O2 = pyrroloquinoline quinone + 2 H2O2 + 2 H2O + H(+). It participates in cofactor biosynthesis; pyrroloquinoline quinone biosynthesis. Functionally, ring cyclization and eight-electron oxidation of 3a-(2-amino-2-carboxyethyl)-4,5-dioxo-4,5,6,7,8,9-hexahydroquinoline-7,9-dicarboxylic-acid to PQQ. The sequence is that of Pyrroloquinoline-quinone synthase from Xanthomonas oryzae pv. oryzae (strain PXO99A).